The chain runs to 100 residues: Small ribosomal subunit protein uS14c (100 aa).

The protein belongs to the universal ribosomal protein uS14 family. Part of the 30S ribosomal subunit.

It localises to the plastid. The protein resides in the chloroplast. Functionally, binds 16S rRNA, required for the assembly of 30S particles. The polypeptide is Small ribosomal subunit protein uS14c (Carica papaya (Papaya)).